Here is a 456-residue protein sequence, read N- to C-terminus: Exodeoxyribonuclease 7 large subunit (456 aa).

It belongs to the XseA family. As to quaternary structure, heterooligomer composed of large and small subunits.

It is found in the cytoplasm. It catalyses the reaction Exonucleolytic cleavage in either 5'- to 3'- or 3'- to 5'-direction to yield nucleoside 5'-phosphates.. Bidirectionally degrades single-stranded DNA into large acid-insoluble oligonucleotides, which are then degraded further into small acid-soluble oligonucleotides. In Azotobacter vinelandii (strain DJ / ATCC BAA-1303), this protein is Exodeoxyribonuclease 7 large subunit.